A 122-amino-acid polypeptide reads, in one-letter code: Ribosome-binding factor A (122 aa).

Belongs to the RbfA family. Monomer. Binds 30S ribosomal subunits, but not 50S ribosomal subunits or 70S ribosomes.

Its subcellular location is the cytoplasm. One of several proteins that assist in the late maturation steps of the functional core of the 30S ribosomal subunit. Associates with free 30S ribosomal subunits (but not with 30S subunits that are part of 70S ribosomes or polysomes). Required for efficient processing of 16S rRNA. May interact with the 5'-terminal helix region of 16S rRNA. The polypeptide is Ribosome-binding factor A (Burkholderia thailandensis (strain ATCC 700388 / DSM 13276 / CCUG 48851 / CIP 106301 / E264)).